We begin with the raw amino-acid sequence, 317 residues long: NAD kinase (317 aa).

Aspartate 82 serves as the catalytic Proton acceptor. NAD(+)-binding positions include 82–83 (DG), arginine 87, 157–158 (NE), aspartate 187, and 198–203 (TAYAFS).

Belongs to the NAD kinase family. A divalent metal cation is required as a cofactor.

The protein localises to the cytoplasm. The enzyme catalyses NAD(+) + ATP = ADP + NADP(+) + H(+). In terms of biological role, involved in the regulation of the intracellular balance of NAD and NADP, and is a key enzyme in the biosynthesis of NADP. Catalyzes specifically the phosphorylation on 2'-hydroxyl of the adenosine moiety of NAD to yield NADP. This is NAD kinase from Corynebacterium diphtheriae (strain ATCC 700971 / NCTC 13129 / Biotype gravis).